Consider the following 144-residue polypeptide: Group IID secretory phospholipase A2 (144 aa).

Residues 1–19 (MRLALLCGLLLAGITATQG) form the signal peptide. 7 disulfide bridges follow: C45–C137, C47–C63, C62–C117, C68–C144, C69–C110, C78–C103, and C96–C108. 3 residues coordinate Ca(2+): H46, G48, and G50. The active site involves H66. D67 provides a ligand contact to Ca(2+). N99 is a glycosylation site (N-linked (GlcNAc...) asparagine). D111 is a catalytic residue.

Belongs to the phospholipase A2 family. Ca(2+) is required as a cofactor. As to expression, highly expressed in secondary lymphoid tissues, spleen and lymph nodes. Expressed at a lesser extent in thymus. Expressed in CD4-positive, IL2RA/CD25-positive, FOXP3-positive Tregs (at protein level). Expressed in myeloid cell subsets resident in spleen and lymph nodes, ITGAX/CD11C-positive dendritic cells and macrophages (at protein level). Enriched in CD4-positive, ITGAM/CD11B-positive dendritic cell subset. Expressed in pulmonary ITGAX/CD11C-positive dendritic cell subset (at protein level).

The protein localises to the secreted. It localises to the cell membrane. The protein resides in the cytoplasm. It carries out the reaction a 1,2-diacyl-sn-glycero-3-phosphoethanolamine + H2O = a 1-acyl-sn-glycero-3-phosphoethanolamine + a fatty acid + H(+). The catalysed reaction is 1-hexadecanoyl-2-(9Z-octadecenoyl)-sn-glycero-3-phosphoethanolamine + H2O = 1-hexadecanoyl-sn-glycero-3-phosphoethanolamine + (9Z)-octadecenoate + H(+). The enzyme catalyses 1-hexadecanoyl-2-(9Z,12Z-octadecadienoyl)-sn-glycero-3-phosphoethanolamine + H2O = 1-hexadecanoyl-sn-glycero-3-phosphoethanolamine + (9Z,12Z)-octadecadienoate + H(+). It catalyses the reaction 1,2-dihexadecanoyl-sn-glycero-3-phospho-(1'-sn-glycerol) + H2O = 1-hexadecanoyl-sn-glycero-3-phospho-(1'-sn-glycerol) + hexadecanoate + H(+). It carries out the reaction 1-hexadecanoyl-2-(9Z-octadecenoyl)-sn-glycero-3-phospho-(1'-sn-glycerol) + H2O = 1-hexadecanoyl-sn-glycero-3-phospho-(1'-sn-glycerol) + (9Z)-octadecenoate + H(+). The catalysed reaction is a 1,2-diacyl-sn-glycero-3-phosphocholine + H2O = a 1-acyl-sn-glycero-3-phosphocholine + a fatty acid + H(+). The enzyme catalyses 1,2-dihexadecanoyl-sn-glycero-3-phosphocholine + H2O = 1-hexadecanoyl-sn-glycero-3-phosphocholine + hexadecanoate + H(+). It catalyses the reaction 1-hexadecanoyl-2-(9Z-octadecenoyl)-sn-glycero-3-phosphocholine + H2O = 1-hexadecanoyl-sn-glycero-3-phosphocholine + (9Z)-octadecenoate + H(+). It carries out the reaction 1-hexadecanoyl-2-(9Z,12Z-octadecadienoyl)-sn-glycero-3-phosphocholine + H2O = (9Z,12Z)-octadecadienoate + 1-hexadecanoyl-sn-glycero-3-phosphocholine + H(+). The catalysed reaction is 1-hexadecanoyl-2-(4Z,7Z,10Z,13Z,16Z,19Z-docosahexaenoyl)-sn-glycero-3-phosphocholine + H2O = (4Z,7Z,10Z,13Z,16Z,19Z)-docosahexaenoate + 1-hexadecanoyl-sn-glycero-3-phosphocholine + H(+). Its function is as follows. Secretory calcium-dependent phospholipase A2 that primarily targets extracellular lipids, exerting anti-inflammatory and immunosuppressive functions. Hydrolyzes the ester bond of the fatty acyl group attached at sn-2 position of phospholipids (phospholipase A2 activity) with preference for phosphatidylethanolamines and phosphatidylglycerols over phosphatidylcholines. In draining lymph nodes, selectively hydrolyzes diacyl and alkenyl forms of phosphatidylethanolamines, releasing omega-3 polyunsaturated fatty acids (PUFAs) such as eicosapentaenoate and docosahexaenoate that are precursors of the anti-inflammatory lipid mediators, resolvins. During the resolution phase of acute inflammation drives docosahexaenoate-derived resolvin D1 synthesis, which suppresses dendritic cell activation and T-helper 1 immune response. May act in an autocrine and paracrine manner. Via a mechanism independent of its catalytic activity, promotes differentiation of regulatory T cells (Tregs) and participates in the maintenance of immune tolerance. May contribute to lipid remodeling of cellular membranes and generation of lipid mediators involved in pathogen clearance. Displays bactericidal activity against Gram-positive bacteria by directly hydrolyzing phospholipids of the bacterial membrane. This chain is Group IID secretory phospholipase A2 (Pla2g2d), found in Mus musculus (Mouse).